The sequence spans 508 residues: Light-independent protochlorophyllide reductase subunit B (508 aa).

Residue D36 participates in [4Fe-4S] cluster binding. D294 acts as the Proton donor in catalysis. 429 to 430 contributes to the substrate binding site; it reads GM.

It belongs to the ChlB/BchB/BchZ family. As to quaternary structure, protochlorophyllide reductase is composed of three subunits; ChlL, ChlN and ChlB. Forms a heterotetramer of two ChlB and two ChlN subunits. It depends on [4Fe-4S] cluster as a cofactor.

The catalysed reaction is chlorophyllide a + oxidized 2[4Fe-4S]-[ferredoxin] + 2 ADP + 2 phosphate = protochlorophyllide a + reduced 2[4Fe-4S]-[ferredoxin] + 2 ATP + 2 H2O. The protein operates within porphyrin-containing compound metabolism; chlorophyll biosynthesis (light-independent). Its function is as follows. Component of the dark-operative protochlorophyllide reductase (DPOR) that uses Mg-ATP and reduced ferredoxin to reduce ring D of protochlorophyllide (Pchlide) to form chlorophyllide a (Chlide). This reaction is light-independent. The NB-protein (ChlN-ChlB) is the catalytic component of the complex. This chain is Light-independent protochlorophyllide reductase subunit B, found in Rippkaea orientalis (strain PCC 8801 / RF-1) (Cyanothece sp. (strain PCC 8801)).